Here is a 3027-residue protein sequence, read N- to C-terminus: DmX-like protein 1 (3027 aa).

WD repeat units follow at residues 108 to 145, 166 to 206, and 229 to 277; these read FLESIAHNITWDPTGSRLLTGSSYLQLWSNTNLEKPTE, KTAS…RTAV, and AHPR…NDCL. 4 positions are modified to phosphoserine: S324, S422, S425, and S436. Residues 420-433 are compositionally biased toward polar residues; sequence PSSEASVEDSNQAD. Residues 420 to 450 are disordered; the sequence is PSSEASVEDSNQADVKSDEETDDGVDDLKIN. A WD 4 repeat occupies 476–516; it reads DHQIEVLLSEWSKNADMLFSIHPMDGSLLVWHVDWLDEYQP. The segment at 563-584 is disordered; that stretch reads KQKPSGLTRSTSMLISSGHNKS. Position 574 is a phosphoserine (S574). WD repeat units follow at residues 580–621, 628–665, and 848–895; these read GHNK…ESAF, SHKSRYCGHRFHLNDLACHSVLPLLLTTSHHNALRTPD, and GKDS…IPVS. Phosphoserine is present on residues S918 and S924. 3 WD repeats span residues 968–1010, 1134–1175, and 1211–1251; these read PSAG…GESA, SNTK…VQDQ, and GSPP…EPVI. 4 positions are modified to phosphoserine: S1830, S1896, S1908, and S1970. Disordered stretches follow at residues 2367–2412 and 2446–2468; these read PSKE…SSAP and SRAEYDSEESLGSDDDDNDDDDD. A compositionally biased stretch (acidic residues) spans 2451-2468; sequence DSEESLGSDDDDNDDDDD. WD repeat units follow at residues 2742 to 2783, 2785 to 2824, 2836 to 2878, 2884 to 2923, 2926 to 2965, and 2978 to 3016; these read KAIN…TCFR, GGNSRVTRMRFNYQGNKFGIVDADGYLSLYQTNWKCCPVT, CHNK…ANSL, CHDSGATVLAYAPKHQLLISGGRKGFTYVFDLCQRQQRQL, SHDSPVKAVAVDPTEEYFVTGSAEGNIKIWSLSTFGLLHT, and NIGTGVMQIETGPANHIFSCGADGTMKMRILPDQFSPLN.

In terms of tissue distribution, expressed in bone, breast, eye, foreskin, heart, parathyroid, small intestine, testis, tonsils, placenta and uterus.

The sequence is that of DmX-like protein 1 (DMXL1) from Homo sapiens (Human).